The sequence spans 511 residues: Phospho-2-dehydro-3-deoxyheptonate aldolase 2, chloroplastic (511 aa).

It belongs to the class-II DAHP synthase family. Leaves, stems, tuber and roots.

The protein localises to the plastid. It localises to the chloroplast. The enzyme catalyses D-erythrose 4-phosphate + phosphoenolpyruvate + H2O = 7-phospho-2-dehydro-3-deoxy-D-arabino-heptonate + phosphate. The protein operates within metabolic intermediate biosynthesis; chorismate biosynthesis; chorismate from D-erythrose 4-phosphate and phosphoenolpyruvate: step 1/7. The sequence is that of Phospho-2-dehydro-3-deoxyheptonate aldolase 2, chloroplastic (SHKB) from Solanum tuberosum (Potato).